Reading from the N-terminus, the 234-residue chain is Leucyl/phenylalanyl-tRNA--protein transferase (234 aa).

Belongs to the L/F-transferase family.

It is found in the cytoplasm. It catalyses the reaction N-terminal L-lysyl-[protein] + L-leucyl-tRNA(Leu) = N-terminal L-leucyl-L-lysyl-[protein] + tRNA(Leu) + H(+). The catalysed reaction is N-terminal L-arginyl-[protein] + L-leucyl-tRNA(Leu) = N-terminal L-leucyl-L-arginyl-[protein] + tRNA(Leu) + H(+). It carries out the reaction L-phenylalanyl-tRNA(Phe) + an N-terminal L-alpha-aminoacyl-[protein] = an N-terminal L-phenylalanyl-L-alpha-aminoacyl-[protein] + tRNA(Phe). Functionally, functions in the N-end rule pathway of protein degradation where it conjugates Leu, Phe and, less efficiently, Met from aminoacyl-tRNAs to the N-termini of proteins containing an N-terminal arginine or lysine. This is Leucyl/phenylalanyl-tRNA--protein transferase from Nitrosomonas eutropha (strain DSM 101675 / C91 / Nm57).